The chain runs to 425 residues: GTPase Obg (425 aa).

Positions 1-158 (MFRDSAKIYV…YSLILEMKMI (158 aa)) constitute an Obg domain. Residues 159–330 (ADVGLVGYPN…LLYAVSETLK (172 aa)) enclose the OBG-type G domain. GTP-binding positions include 165–172 (GYPNVGKS), 190–194 (FTTLV), 212–215 (DIPG), 282–285 (NKMD), and 311–313 (SAA). Ser-172 and Thr-192 together coordinate Mg(2+). The OCT domain occupies 348–425 (YKVQEEKPFE…IYDTEFDYTR (78 aa)).

Belongs to the TRAFAC class OBG-HflX-like GTPase superfamily. OBG GTPase family. In terms of assembly, monomer. Requires Mg(2+) as cofactor.

It localises to the cytoplasm. An essential GTPase which binds GTP, GDP and possibly (p)ppGpp with moderate affinity, with high nucleotide exchange rates and a fairly low GTP hydrolysis rate. Plays a role in control of the cell cycle, stress response, ribosome biogenesis and in those bacteria that undergo differentiation, in morphogenesis control. The chain is GTPase Obg from Ruminiclostridium cellulolyticum (strain ATCC 35319 / DSM 5812 / JCM 6584 / H10) (Clostridium cellulolyticum).